The chain runs to 205 residues: Ypt/Rab-type GTPase avaA (205 aa).

Residues 17–23 (SGVGKTS), 33–40 (FSGSYKAT), G66, 125–128 (NKID), and 157–159 (SAK) each bind GTP. Positions 37-45 (YKATIGADF) match the Effector region motif. Residues C203 and C205 are each lipidated (S-geranylgeranyl cysteine). A Cysteine methyl ester modification is found at C205.

This sequence belongs to the small GTPase superfamily. Rab family.

Rab activation is generally mediated by a guanine exchange factor (GEF), while inactivation through hydrolysis of bound GTP is catalyzed by a GTPase activating protein (GAP). Functionally, ypt/Rab-type GTPases are key regulators of membrane trafficking and intracellular vesicular transport. They act as molecular switches that convert between GTP-bound and GDP-bound states, and regulate virtually all steps of membrane traffic from the formation of the transport vesicle at the donor membrane to its fusion at the target membrane. In the GDP-bound state, Ypt proteins are predominantly cytosolic, solubilized through the interaction with a GDP dissociation inhibitor (GDI). In the GTP-bound state, the proteins are membrane bound and interact with specific effector proteins that select cargo, promote vesicle movement, or verify the correct site of fusion. AvaA functions in vacuolar biogenesis. The polypeptide is Ypt/Rab-type GTPase avaA (Emericella nidulans (strain FGSC A4 / ATCC 38163 / CBS 112.46 / NRRL 194 / M139) (Aspergillus nidulans)).